Here is a 118-residue protein sequence, read N- to C-terminus: DNA-binding protein YG5714_1868 (118 aa).

This sequence belongs to the PDCD5 family.

This is DNA-binding protein YG5714_1868 from Saccharolobus islandicus (strain Y.G.57.14 / Yellowstone #1) (Sulfolobus islandicus).